The sequence spans 35 residues: MEALVYTFLLVSTLGIIFFAIFFREPPKVPTKKAK.

Residues alanine 3–phenylalanine 23 traverse the membrane as a helical segment.

The protein belongs to the PsbT family. In terms of assembly, PSII is composed of 1 copy each of membrane proteins PsbA, PsbB, PsbC, PsbD, PsbE, PsbF, PsbH, PsbI, PsbJ, PsbK, PsbL, PsbM, PsbT, PsbY, PsbZ, Psb30/Ycf12, at least 3 peripheral proteins of the oxygen-evolving complex and a large number of cofactors. It forms dimeric complexes.

The protein localises to the plastid. Its subcellular location is the chloroplast thylakoid membrane. Its function is as follows. Found at the monomer-monomer interface of the photosystem II (PS II) dimer, plays a role in assembly and dimerization of PSII. PSII is a light-driven water plastoquinone oxidoreductase, using light energy to abstract electrons from H(2)O, generating a proton gradient subsequently used for ATP formation. This is Photosystem II reaction center protein T from Cabomba caroliniana (Carolina fanwort).